The following is a 109-amino-acid chain: MAGSSSLLRAGIRNVLLMQMRRSSDQLGELGKGAGKGGGGGGSVREAGGAFGKRQAAEEERYFRQKEQEQIASLRKHHEEEIRHHKGEIERLQKEIERHKSKIKKLNDD.

The N-terminal 22 residues, 1 to 22 (MAGSSSLLRAGIRNVLLMQMRR), are a transit peptide targeting the mitochondrion. Residues 27-56 (LGELGKGAGKGGGGGGSVREAGGAFGKRQA) form an N-terminal inhibitory region region. The interval 27–109 (LGELGKGAGK…KSKIKKLNDD (83 aa)) is disordered. A compositionally biased stretch (gly residues) spans 30-43 (LGKGAGKGGGGGGS). 2 stretches are compositionally biased toward basic and acidic residues: residues 55-69 (QAAEEERYFRQKEQE) and 77-98 (HHEEEIRHHKGEIERLQKEIER). Positions 71–109 (IASLRKHHEEEIRHHKGEIERLQKEIERHKSKIKKLNDD) form a coiled coil. The tract at residues 78 to 109 (HEEEIRHHKGEIERLQKEIERHKSKIKKLNDD) is antiparallel alpha-helical coiled coil region. Over residues 99–109 (HKSKIKKLNDD) the composition is skewed to basic residues.

This sequence belongs to the ATPase inhibitor family. As to quaternary structure, homodimer; represents the active form and is present at a pH value below 6.5. Homotetramer; represents the inactive form and is present at a pH value above 7.0.

The protein resides in the mitochondrion. In terms of biological role, endogenous F(1)F(o)-ATPase inhibitor limiting ATP depletion when the mitochondrial membrane potential falls below a threshold and the F(1)F(o)-ATP synthase starts hydrolyzing ATP to pump protons out of the mitochondrial matrix. Required to avoid the consumption of cellular ATP when the F(1)F(o)-ATP synthase enzyme acts as an ATP hydrolase. Indirectly acts as a regulator of heme synthesis in erythroid tissues: regulates heme synthesis by modulating the mitochondrial pH and redox potential, allowing fech to efficiently catalyze the incorporation of iron into protoporphyrin IX to produce heme. This chain is ATPase inhibitor, mitochondrial, found in Xenopus tropicalis (Western clawed frog).